Reading from the N-terminus, the 122-residue chain is Double-headed protease inhibitor, submandibular gland (122 aa).

2 consecutive Kazal-like domains span residues Gly10 to Ile70 and Glu71 to Ser121. Disulfide bonds link Cys16-Cys50, Cys28-Cys47, Cys36-Cys68, Cys72-Cys101, Cys79-Cys98, and Cys87-Cys119.

The protein resides in the secreted. Functionally, this inhibitor is composed of two homologous actively inhibiting halves: one which inhibits trypsin, the other which inhibits elastase. In Martes martes (European pine marten), this protein is Double-headed protease inhibitor, submandibular gland.